Reading from the N-terminus, the 41-residue chain is trp operon leader peptide (41 aa).

Functionally, this protein is involved in control of the biosynthesis of tryptophan. This is trp operon leader peptide (trpL) from Vibrio parahaemolyticus serotype O3:K6 (strain RIMD 2210633).